We begin with the raw amino-acid sequence, 616 residues long: Schwannomin-interacting protein 1 homolog (616 aa).

The segment covering E38–P50 has biased composition (acidic residues). Disordered regions lie at residues E38–S71, L204–F251, and S292–Q320. 2 stretches are compositionally biased toward polar residues: residues S62 to S71 and L204 to T217. Residues L550–N594 are a coiled coil.

The protein belongs to the SCHIP1 family. As to quaternary structure, interacts with ex; the interaction results in recruitment of Schip1 to the apical cell membrane. Interacts with Tao; the interaction enhances Tao kinase activity. Interacts with Mer. In eye disks of the third instar larvae, expressed in all cells (at protein level).

The protein resides in the cell junction. The protein localises to the adherens junction. It localises to the apical cell membrane. Functionally, regulator of the Hippo/SWH (Sav/Wts/Hpo) signaling pathway, a signaling pathway that plays a pivotal role in organ size control and tumor suppression by restricting proliferation and promoting apoptosis. The core of this pathway is composed of a kinase cascade wherein Hippo (hpo), in complex with its regulatory protein Salvador (sav), phosphorylates and activates Warts (wts) in complex with its regulatory protein Mats, which in turn phosphorylates and inactivates the Yorkie (yki) oncoprotein. Schip1 promotes kinase activity of Tao and enhances phosphorylation of hpo by Tao. The protein is Schwannomin-interacting protein 1 homolog of Drosophila melanogaster (Fruit fly).